The following is a 255-amino-acid chain: MRSEQPLYNKRLFSDIIDKSTHFKEGLGLDKQKYLLDEVKRIEDLKRYEYEAYNNGFRYIAGIDEAGRGPIAGPVMAAAVILSRDFFCPGINDSKKLTALKRSKLAAEIKKQAISWSVAAVFPSYLDKVNILNATREAMLLAVKNLSPRPEFLLIDAVQLPDIDIKQYPLIKGDSLSVSIAAASILAKVERDRVMEAFDSLYPGYGFSRHKGYATREHLQSLLRLGTCALHRVSFEPVKSMVLGARYGEQPALFE.

An RNase H type-2 domain is found at 58–247 (RYIAGIDEAG…VKSMVLGARY (190 aa)). A divalent metal cation contacts are provided by aspartate 64, glutamate 65, and aspartate 156.

This sequence belongs to the RNase HII family. It depends on Mn(2+) as a cofactor. Mg(2+) serves as cofactor.

The protein resides in the cytoplasm. It catalyses the reaction Endonucleolytic cleavage to 5'-phosphomonoester.. Endonuclease that specifically degrades the RNA of RNA-DNA hybrids. The sequence is that of Ribonuclease HII from Syntrophomonas wolfei subsp. wolfei (strain DSM 2245B / Goettingen).